The sequence spans 371 residues: Dual-specificity RNA methyltransferase RlmN (371 aa).

Glu99 functions as the Proton acceptor in the catalytic mechanism. Residues 106-333 (DDNRATLCIS…AIRRASKGQD (228 aa)) enclose the Radical SAM core domain. A disulfide bond links Cys113 and Cys338. Residues Cys120, Cys124, and Cys127 each contribute to the [4Fe-4S] cluster site. S-adenosyl-L-methionine-binding positions include 165–166 (GE), Ser197, 219–221 (SLN), and Asn295. The S-methylcysteine intermediate role is filled by Cys338. The disordered stretch occupies residues 345 to 371 (LTVSPPAQESERNSARPDRSQGKGKHL). Basic and acidic residues predominate over residues 353 to 365 (ESERNSARPDRSQ).

It belongs to the radical SAM superfamily. RlmN family. The cofactor is [4Fe-4S] cluster.

The protein localises to the cytoplasm. It carries out the reaction adenosine(2503) in 23S rRNA + 2 reduced [2Fe-2S]-[ferredoxin] + 2 S-adenosyl-L-methionine = 2-methyladenosine(2503) in 23S rRNA + 5'-deoxyadenosine + L-methionine + 2 oxidized [2Fe-2S]-[ferredoxin] + S-adenosyl-L-homocysteine. The catalysed reaction is adenosine(37) in tRNA + 2 reduced [2Fe-2S]-[ferredoxin] + 2 S-adenosyl-L-methionine = 2-methyladenosine(37) in tRNA + 5'-deoxyadenosine + L-methionine + 2 oxidized [2Fe-2S]-[ferredoxin] + S-adenosyl-L-homocysteine. Its function is as follows. Specifically methylates position 2 of adenine 2503 in 23S rRNA and position 2 of adenine 37 in tRNAs. m2A2503 modification seems to play a crucial role in the proofreading step occurring at the peptidyl transferase center and thus would serve to optimize ribosomal fidelity. The protein is Dual-specificity RNA methyltransferase RlmN of Syntrophotalea carbinolica (strain DSM 2380 / NBRC 103641 / GraBd1) (Pelobacter carbinolicus).